The primary structure comprises 339 residues: Glyoxylate reductase (339 aa).

NADP(+)-binding positions include 157–160 (LGRI) and 239–241 (TAR). Catalysis depends on residues arginine 241 and glutamate 270. Histidine 289 functions as the Proton donor in the catalytic mechanism. 289–291 (HIA) serves as a coordination point for NADP(+).

It belongs to the D-isomer specific 2-hydroxyacid dehydrogenase family. GyaR subfamily. As to quaternary structure, homodimer.

It is found in the cytoplasm. The enzyme catalyses glycolate + NAD(+) = glyoxylate + NADH + H(+). The protein is Glyoxylate reductase of Thermofilum pendens (strain DSM 2475 / Hrk 5).